A 257-amino-acid chain; its full sequence is Capsid protein (257 aa).

Positions 3–20 (KRNYDTAFSTPMSNVRRR) match the Bipartite nuclear localization signal motif. The short motif at 41-55 (KRRRWTNRPMWRKPR) is the Nuclear localization signal element. Residues 69 to 86 (CEGPCKVQSFEAKHDISH) fold into a zinc finger. Residues 102–123 (ITHRVGKRFCVKSIWVTGKIWM) carry the Nuclear export signal motif. Residues 201-248 (SKFYRVNNYVVYNHQEAAKYENHTENALLLYMACTHASNPVYATLKIR) carry the Bipartite nuclear localization signal motif.

The protein belongs to the geminiviridae capsid protein family. In terms of assembly, homomultimer. Binds to single-stranded and double-stranded viral DNA. Interacts (via nuclear localization signals) with host importin alpha-1a.

The protein localises to the virion. The protein resides in the host nucleus. Its function is as follows. Encapsidates the viral DNA into characteristic twinned ('geminate') particles. Binds the genomic viral ssDNA and shuttles it into and out of the cell nucleus. The CP of bipartite geminiviruses is not required for cell-to-cell or systemic movement. This is Capsid protein from Glycine max (Soybean).